We begin with the raw amino-acid sequence, 221 residues long: PKHD-type hydroxylase PMN2A_0775 (221 aa).

The Fe2OG dioxygenase domain occupies 80–174 (LIHGVMFTQS…RHVCVGWIQS (95 aa)). The Fe cation site is built by H98, D100, and H155. R165 lines the 2-oxoglutarate pocket.

Requires Fe(2+) as cofactor. L-ascorbate is required as a cofactor.

The sequence is that of PKHD-type hydroxylase PMN2A_0775 from Prochlorococcus marinus (strain NATL2A).